An 81-amino-acid polypeptide reads, in one-letter code: Apolipoprotein C-I, acidic form (81 aa).

The signal sequence occupies residues 1 to 24 (MRLFLSLLVVVLSIVLEGPTPAQG).

Belongs to the apolipoprotein C1 family.

The protein localises to the secreted. The chain is Apolipoprotein C-I, acidic form (APOC1A) from Cercocebus atys (Sooty mangabey).